A 199-amino-acid chain; its full sequence is Superoxide dismutase [Mn/Fe] (199 aa).

Fe(3+) is bound by residues His-27, His-81, Asp-161, and His-165. Residues His-27, His-81, Asp-161, and His-165 each coordinate Mn(2+).

Belongs to the iron/manganese superoxide dismutase family. In terms of assembly, homodimer. It depends on Mn(2+) as a cofactor. Requires Fe(3+) as cofactor.

The enzyme catalyses 2 superoxide + 2 H(+) = H2O2 + O2. Functionally, destroys superoxide anion radicals which are normally produced within the cells and which are toxic to biological systems. Catalyzes the dismutation of superoxide anion radicals into O2 and H2O2 by successive reduction and oxidation of the transition metal ion at the active site. This Staphylococcus epidermidis protein is Superoxide dismutase [Mn/Fe] (sodA).